A 433-amino-acid chain; its full sequence is Enolase (433 aa).

Residue Q167 participates in (2R)-2-phosphoglycerate binding. The Proton donor role is filled by E209. Residues D246, E291, and D318 each contribute to the Mg(2+) site. Residues K343, R372, S373, and K394 each contribute to the (2R)-2-phosphoglycerate site. K343 acts as the Proton acceptor in catalysis.

Belongs to the enolase family. In terms of assembly, component of the RNA degradosome, a multiprotein complex involved in RNA processing and mRNA degradation. Mg(2+) serves as cofactor.

The protein resides in the cytoplasm. It is found in the secreted. Its subcellular location is the cell surface. The catalysed reaction is (2R)-2-phosphoglycerate = phosphoenolpyruvate + H2O. The protein operates within carbohydrate degradation; glycolysis; pyruvate from D-glyceraldehyde 3-phosphate: step 4/5. Its function is as follows. Catalyzes the reversible conversion of 2-phosphoglycerate (2-PG) into phosphoenolpyruvate (PEP). It is essential for the degradation of carbohydrates via glycolysis. The chain is Enolase from Hamiltonella defensa subsp. Acyrthosiphon pisum (strain 5AT).